The chain runs to 88 residues: MLVTDKKKEIITTHKLHDSDTGSPEVQIALLTERIIYLTEHFKVHKKDHHSRRGLLKIVGQRRRLLDYLKKKDVERYRSIIEKLGIRR.

Belongs to the universal ribosomal protein uS15 family. Part of the 30S ribosomal subunit. Forms a bridge to the 50S subunit in the 70S ribosome, contacting the 23S rRNA.

In terms of biological role, one of the primary rRNA binding proteins, it binds directly to 16S rRNA where it helps nucleate assembly of the platform of the 30S subunit by binding and bridging several RNA helices of the 16S rRNA. Its function is as follows. Forms an intersubunit bridge (bridge B4) with the 23S rRNA of the 50S subunit in the ribosome. This is Small ribosomal subunit protein uS15 from Geobacter sulfurreducens (strain ATCC 51573 / DSM 12127 / PCA).